We begin with the raw amino-acid sequence, 304 residues long: Flagellin (304 aa).

Belongs to the bacterial flagellin family. Interacts with FliW in a 1:1 complex. Forms a 3-way complex of Hag, FliS and FliW, in which Flis and FliW do not directly interact.

The protein resides in the secreted. Its subcellular location is the bacterial flagellum. The protein localises to the cell wall. Its function is as follows. Flagellin is the subunit which polymerizes to form the filaments of bacterial flagella. Assembly into flagella requires FliW. Acts as a homeostatic autoinhibitory regulator to control its own cytoplasmic levels. Partner switching by flagellin between FliW and CsrA provides a flagellar assembly checkpoint to tightly control the timing of flagellin synthesis. Flagellin binds to assembly factor FliW, freeing translation regulator CsrA to repress translation of the flagellin mRNA. When the flagellar hook is assembled flagellin is secreted, depleting intracellular flagellin, which frees FliW to interact with CsrA. This derepresses flagellin translation and provides protein for flagellar assembly. Once the flagellar filament is completed cytoplasmic flagellin levels rise and CsrA translation repression of flagellin reinitiates. The protein is Flagellin of Bacillus subtilis (strain 168).